A 139-amino-acid polypeptide reads, in one-letter code: Large ribosomal subunit protein uL16 (139 aa).

This sequence belongs to the universal ribosomal protein uL16 family. Part of the 50S ribosomal subunit.

Functionally, binds 23S rRNA and is also seen to make contacts with the A and possibly P site tRNAs. This is Large ribosomal subunit protein uL16 from Chlorobium luteolum (strain DSM 273 / BCRC 81028 / 2530) (Pelodictyon luteolum).